The following is a 242-amino-acid chain: Large ribosomal subunit protein uL30y (242 aa).

The protein belongs to the universal ribosomal protein uL30 family.

This chain is Large ribosomal subunit protein uL30y (RPL7B), found in Arabidopsis thaliana (Mouse-ear cress).